Reading from the N-terminus, the 125-residue chain is Snaclec botrocetin subunit beta (125 aa).

Intrachain disulfides connect cysteine 2-cysteine 13, cysteine 30-cysteine 121, and cysteine 98-cysteine 113. In terms of domain architecture, C-type lectin spans 9–122; sequence YEGHCYRFFK…CTRFKNFVCE (114 aa).

It belongs to the snaclec family. In terms of assembly, heterodimer of subunits alpha and beta; disulfide-linked. Botrocetin and vWF form a soluble complex. As to expression, expressed by the venom gland.

Its subcellular location is the secreted. Its function is as follows. Snaclec that binds to von Willebrand factor (VWF) and induces its interaction with GPIbalpha (GP1BA) (via the vWF A1 domain), resulting in platelet aggregation. The chain is Snaclec botrocetin subunit beta from Bothrops jararaca (Jararaca).